The following is a 260-amino-acid chain: Neuraminyllactose-binding hemagglutinin (260 aa).

Residues 1-27 (MKTNGHFKDFAWKKCLLGASVGALLVG) form the signal peptide. C28 carries the N-palmitoyl cysteine lipid modification. C28 is lipidated: S-diacylglycerol cysteine. Positions 134–139 (KRTIQK) are N-acetyl-neuraminyl-alpha(2,3)-lactose binding motif.

The protein resides in the cell outer membrane. The polypeptide is Neuraminyllactose-binding hemagglutinin (hpaA) (Helicobacter pylori (Campylobacter pylori)).